The sequence spans 258 residues: uncharacterized protein (258 aa).

Positions Met1 to Ser19 are cleaved as a signal peptide.

This is an uncharacterized protein from Escherichia coli (strain K12).